The chain runs to 442 residues: ATP-dependent protease ATPase subunit HslU (442 aa).

ATP is bound by residues Ile-18 and 60 to 65 (GVGKTE). The tract at residues 137–156 (PKPKNDWESTETDSSSNTRQ) is disordered. ATP-binding residues include Asp-255, Glu-320, and Arg-392.

This sequence belongs to the ClpX chaperone family. HslU subfamily. A double ring-shaped homohexamer of HslV is capped on each side by a ring-shaped HslU homohexamer. The assembly of the HslU/HslV complex is dependent on binding of ATP.

Its subcellular location is the cytoplasm. Its function is as follows. ATPase subunit of a proteasome-like degradation complex; this subunit has chaperone activity. The binding of ATP and its subsequent hydrolysis by HslU are essential for unfolding of protein substrates subsequently hydrolyzed by HslV. HslU recognizes the N-terminal part of its protein substrates and unfolds these before they are guided to HslV for hydrolysis. The polypeptide is ATP-dependent protease ATPase subunit HslU (Shewanella baltica (strain OS155 / ATCC BAA-1091)).